The sequence spans 192 residues: uncharacterized protein (192 aa).

In terms of domain architecture, Nudix hydrolase spans 29–160 (HRQAAVLIPI…PLDIYRRGDS (132 aa)). The Nudix box motif lies at 67–89 (GAVDDTDASAIAAALREAEEEVA). Residues glutamate 83 and glutamate 87 each coordinate Mg(2+).

It belongs to the Nudix hydrolase family. PCD1 subfamily. Mn(2+) is required as a cofactor. Requires Mg(2+) as cofactor.

Its function is as follows. Probably mediates the hydrolysis of some nucleoside diphosphate derivatives. This is an uncharacterized protein from Escherichia coli (strain K12).